The primary structure comprises 355 residues: Tetraacyldisaccharide 4'-kinase (355 aa).

Position 49–56 (49–56 (SAGGTGKT)) interacts with ATP.

The protein belongs to the LpxK family.

The enzyme catalyses a lipid A disaccharide + ATP = a lipid IVA + ADP + H(+). Its pathway is glycolipid biosynthesis; lipid IV(A) biosynthesis; lipid IV(A) from (3R)-3-hydroxytetradecanoyl-[acyl-carrier-protein] and UDP-N-acetyl-alpha-D-glucosamine: step 6/6. Functionally, transfers the gamma-phosphate of ATP to the 4'-position of a tetraacyldisaccharide 1-phosphate intermediate (termed DS-1-P) to form tetraacyldisaccharide 1,4'-bis-phosphate (lipid IVA). The protein is Tetraacyldisaccharide 4'-kinase of Chlorobium phaeobacteroides (strain DSM 266 / SMG 266 / 2430).